Reading from the N-terminus, the 575-residue chain is Bifunctional decalin synthase calF (575 aa).

The signal sequence occupies residues Met1–Gly18. N-linked (GlcNAc...) asparagine glycans are attached at residues Asn46, Asn103, Asn127, Asn175, Asn268, Asn308, Asn359, Asn425, and Asn485. Residues Leu118–Asp297 form the FAD-binding PCMH-type domain.

The protein belongs to the oxygen-dependent FAD-linked oxidoreductase family.

The protein operates within secondary metabolite biosynthesis. Its function is as follows. Bifunctional decaline synthase; part of the gene cluster that mediates the biosynthesis of calbistrin A and related compounds. Calbistrin A is a secondary metabolite with an interesting structure that was recently found to have bioactivity against leukemia cells. It consists of two polyketides linked by an ester bond: a bicyclic decalin containing polyketide and a linear 12 carbon dioic acid structure. The polyketide synthase calA is probably responsible for forming the decalin moiety. Because calA lacks a designated enoylreductase (ER) domain, the required activity is provided by the trans-enoyl reductase calK. Following release from the PKS, calF then probably catalyzes the oxidation and the subsequent Diels Alder cycloisomerization that lead to the formation of the decalin moiety. The decalin polyketide backbone includes two C-methyl groups, at C7 and C11 in backbone, of which the C7 position is probably methylated by the methyltransferase domain of calA. A candidate for adding the methyl group at C11, if not done by CalA, is the cluster methyltransferase calH. Several additional tailoring enzymes within the cluster could be involved in the modification of the decalin polyketide product. Those include the 3 cytochrome P450 monooxygenases CalE, CalG and CalL, of which one might be responsible for the introduction of the extra hydroxyl group attached to the backbone of the decalin moiety, at position C9 in the backbone, that allows for attachment of the linear moiety. One tailoring enzyme activity that is expected to be involved in biosynthesis of calbistrin is an acyltransferase for connecting the two polyketide synthase products, and which could be performed by the cluster acyltransferase calJ. The enzyme responsible for the biosynthesis of the linear moiety, probably a second PKS, has not been identified yet. The chain is Bifunctional decalin synthase calF from Penicillium decumbens.